Consider the following 194-residue polypeptide: A-type ATP synthase subunit E (194 aa).

The protein belongs to the V-ATPase E subunit family. As to quaternary structure, has multiple subunits with at least A(3), B(3), C, D, E, F, H, I and proteolipid K(x).

It localises to the cell membrane. In terms of biological role, component of the A-type ATP synthase that produces ATP from ADP in the presence of a proton gradient across the membrane. The protein is A-type ATP synthase subunit E of Saccharolobus islandicus (strain Y.N.15.51 / Yellowstone #2) (Sulfolobus islandicus).